The sequence spans 101 residues: Gastrin (101 aa).

Positions 1-21 are cleaved as a signal peptide; sequence MQRLCVYVLIFALALAAFSEA. The tract at residues 22–82 is disordered; it reads SWKPRSQQPD…SKKQGPWLEE (61 aa). The residue at position 59 (glutamine 59) is a Pyrrolidone carboxylic acid; in form big gastrin. A Pyrrolidone carboxylic acid; in form gastrin modification is found at glutamine 76. Tyrosine 87 is subject to Sulfotyrosine; partial. Phenylalanine amide is present on phenylalanine 92. Residue serine 96 is modified to Phosphoserine. Positions 96-101 are cleaved as a propeptide — removed in mature form; that stretch reads SAEDEN.

This sequence belongs to the gastrin/cholecystokinin family. Two different processing pathways probably exist in antral G-cells. In the dominant pathway progastrin is cleaved at three sites resulting in two major bioactive gastrins, gastrin-34 and gastrin-17. In the putative alternative pathway, progastrin may be processed only at the most C-terminal dibasic site resulting in the synthesis of gastrin-71. In terms of processing, sulfation enhances proteolytic processing, and blocks peptide degradation. Levels of sulfation differ between proteolytically-cleaved gastrins. Thus, gastrin-6 is almost 73% sulfated, whereas the larger gastrins are less than 50% sulfated. Sulfation levels are also tissue-specific.

The protein localises to the secreted. Gastrin stimulates the stomach mucosa to produce and secrete hydrochloric acid and the pancreas to secrete its digestive enzymes. It also stimulates smooth muscle contraction and increases blood circulation and water secretion in the stomach and intestine. This Homo sapiens (Human) protein is Gastrin (GAST).